A 155-amino-acid polypeptide reads, in one-letter code: Large ribosomal subunit protein eL24 (155 aa).

The segment covering 98-129 (PEVRKAKRDDKAKADKEKKKADKAARKAEKAK) has biased composition (basic and acidic residues). Residues 98–155 (PEVRKAKRDDKAKADKEKKKADKAARKAEKAKLAAAQGSKVSKQQAKGAFQKVAATSR) form a disordered region.

It belongs to the eukaryotic ribosomal protein eL24 family.

The polypeptide is Large ribosomal subunit protein eL24 (RPL24) (Candida glabrata (strain ATCC 2001 / BCRC 20586 / JCM 3761 / NBRC 0622 / NRRL Y-65 / CBS 138) (Yeast)).